The primary structure comprises 126 residues: C-type natriuretic peptide (126 aa).

Residues 1-23 form the signal peptide; that stretch reads MHLSQLLACALLLSLLSLRPSEA. A disordered region spans residues 20-71; that stretch reads PSEAKPGAPPKVPRTPPGEEVAEPQAAGGGQKKGDKTPGGGGANLKDDRSRL. The propeptide occupies 24–73; that stretch reads KPGAPPKVPRTPPGEEVAEPQAAGGGQKKGDKTPGGGGANLKDDRSRLLR. Residues 26-35 are compositionally biased toward pro residues; it reads GAPPKVPRTP. Over residues 46-62 the composition is skewed to gly residues; that stretch reads AGGGQKKGDKTPGGGGA. An intrachain disulfide couples cysteine 110 to cysteine 126.

This sequence belongs to the natriuretic peptide family. Post-translationally, degraded by IDE (in vitro).

Its subcellular location is the secreted. In terms of biological role, hormone which plays a role in endochondral ossification through regulation of cartilaginous growth plate chondrocytes proliferation and differentiation. May also be vasoactive and natriuretic. Acts by specifically binding and stimulating NPR2 to produce cGMP. Binds the clearance receptor NPR3. In Ovis aries (Sheep), this protein is C-type natriuretic peptide (NPPC).